The following is a 127-amino-acid chain: Phosphoribosyl-AMP cyclohydrolase (127 aa).

D78 serves as a coordination point for Mg(2+). C79 contributes to the Zn(2+) binding site. Mg(2+) is bound by residues D80 and D82. Zn(2+) contacts are provided by C95 and C102.

The protein belongs to the PRA-CH family. Homodimer. Mg(2+) is required as a cofactor. Requires Zn(2+) as cofactor.

The protein localises to the cytoplasm. It carries out the reaction 1-(5-phospho-beta-D-ribosyl)-5'-AMP + H2O = 1-(5-phospho-beta-D-ribosyl)-5-[(5-phospho-beta-D-ribosylamino)methylideneamino]imidazole-4-carboxamide. Its pathway is amino-acid biosynthesis; L-histidine biosynthesis; L-histidine from 5-phospho-alpha-D-ribose 1-diphosphate: step 3/9. Its function is as follows. Catalyzes the hydrolysis of the adenine ring of phosphoribosyl-AMP. The protein is Phosphoribosyl-AMP cyclohydrolase of Salinibacter ruber (strain DSM 13855 / M31).